The chain runs to 518 residues: AarF domain-containing kinase 1 (518 aa).

Residues 149–468 (SFEREPLGTA…SKCCVQSSYA (320 aa)) enclose the Protein kinase domain. ATP is bound by residues 155–163 (LGTASLAQV) and lysine 177. Catalysis depends on aspartate 309, which acts as the Proton acceptor.

Belongs to the protein kinase superfamily. ADCK protein kinase family.

The protein localises to the mitochondrion. In terms of biological role, essential for maintaining mitochondrial cristae formation and mitochondrial function by acting via YME1L to regulate the mitochondrial structural proteins Opa1 and Mitofilin. This function is likely to be kinase-independent. Functions in tracheal development and larval molting probably by acting in sterol modification and/or intracellular lipid trafficking. The action of this enzyme is not yet clear. It is not known if it has protein kinase activity and what type of substrate it would phosphorylate (Ser, Thr or Tyr). In Drosophila melanogaster (Fruit fly), this protein is AarF domain-containing kinase 1.